A 393-amino-acid chain; its full sequence is Formate-dependent phosphoribosylglycinamide formyltransferase (393 aa).

N(1)-(5-phospho-beta-D-ribosyl)glycinamide is bound by residues 22-23 (EL) and E82. ATP-binding positions include R114, K155, 160-165 (SSGHGQ), 195-198 (EGFV), and E203. The ATP-grasp domain occupies 119–308 (RLAAEELGLP…EFALHARAIL (190 aa)). 2 residues coordinate Mg(2+): E267 and E279. N(1)-(5-phospho-beta-D-ribosyl)glycinamide-binding positions include D286, K356, and 363-364 (RR).

Belongs to the PurK/PurT family. Homodimer.

It carries out the reaction N(1)-(5-phospho-beta-D-ribosyl)glycinamide + formate + ATP = N(2)-formyl-N(1)-(5-phospho-beta-D-ribosyl)glycinamide + ADP + phosphate + H(+). The protein operates within purine metabolism; IMP biosynthesis via de novo pathway; N(2)-formyl-N(1)-(5-phospho-D-ribosyl)glycinamide from N(1)-(5-phospho-D-ribosyl)glycinamide (formate route): step 1/1. Its function is as follows. Involved in the de novo purine biosynthesis. Catalyzes the transfer of formate to 5-phospho-ribosyl-glycinamide (GAR), producing 5-phospho-ribosyl-N-formylglycinamide (FGAR). Formate is provided by PurU via hydrolysis of 10-formyl-tetrahydrofolate. The sequence is that of Formate-dependent phosphoribosylglycinamide formyltransferase from Pasteurella multocida (strain Pm70).